The sequence spans 730 residues: uncharacterized protein (730 aa).

A compositionally biased stretch (basic and acidic residues) spans phenylalanine 615–aspartate 625. 2 disordered regions span residues phenylalanine 615–serine 667 and lysine 684–isoleucine 730. Low complexity-rich tracts occupy residues serine 653–serine 667 and lysine 684–serine 701. Residues lysine 713–serine 723 show a composition bias toward basic residues.

This is an uncharacterized protein from Saccharomyces cerevisiae (strain ATCC 204508 / S288c) (Baker's yeast).